Consider the following 333-residue polypeptide: Olfactory receptor 1078 (333 aa).

Residues Met1–Pro25 lie on the Extracellular side of the membrane. A glycan (N-linked (GlcNAc...) asparagine) is linked at Asn5. The helical transmembrane segment at Leu26 to Ile50 threads the bilayer. At Ser51–Thr57 the chain is on the cytoplasmic side. A helical transmembrane segment spans residues Pro58–Pro79. Residues Lys80–Gln100 are Extracellular-facing. Cys97 and Cys189 are joined by a disulfide. Residues Ile101–Tyr120 traverse the membrane as a helical segment. At Asp121–Lys139 the chain is on the cytoplasmic side. Residues Leu140–Phe158 form a helical membrane-spanning segment. The Extracellular portion of the chain corresponds to Gln159–Asp196. The helical transmembrane segment at Leu197–Phe219 threads the bilayer. Topologically, residues Lys220–Lys236 are cytoplasmic. A helical membrane pass occupies residues Ala237–Leu260. At Ser261 to Ala272 the chain is on the extracellular side. The chain crosses the membrane as a helical span at residues Thr273–Leu292. The Cytoplasmic portion of the chain corresponds to Arg293–Tyr333.

Belongs to the G-protein coupled receptor 1 family. As to expression, olfactory epithelium.

Its subcellular location is the cell membrane. Odorant receptor. This Rattus norvegicus (Rat) protein is Olfactory receptor 1078 (Olr1078).